Here is a 470-residue protein sequence, read N- to C-terminus: Calcium/manganese antiporter SLC30A10 (470 aa).

Over 1 to 10 (MGRYSGKTCR) the chain is Cytoplasmic. Residues 11–31 (LLFMLVLTAAFFVAELVSGYL) traverse the membrane as a helical segment. Residues 32-34 (GNS) are Extracellular-facing. The chain crosses the membrane as a helical span at residues 35-55 (IALLSDSFNMLSDLISLCVGL). Over 56-81 (GSGYIARRGPRGSSATYGYVRAEVVG) the chain is Cytoplasmic. The helical transmembrane segment at 82–102 (ALSNAVFLTALCFTIFVEAVL) threads the bilayer. Residues 103 to 113 (RLARPERIDDP) lie on the Extracellular side of the membrane. A helical membrane pass occupies residues 114 to 134 (ELVLIVGALGLAVNVVGLLIF). The Cytoplasmic portion of the chain corresponds to 135–233 (QDCGACFSRC…KSEALNIRGV (99 aa)). A disordered region spans residues 146–223 (RGRRTRPSQQ…EPEETTKKEK (78 aa)). Residues 171-184 (AATATAPGSGTAVT) show a composition bias toward low complexity. A helical membrane pass occupies residues 234-254 (LLHVMGDALGSVVVVITAIIF). The Extracellular portion of the chain corresponds to 255-270 (YVQPLRREDPCNWQCY). A helical transmembrane segment spans residues 271 to 291 (IDPSLTVVMVIIILSSAFPLI). The Cytoplasmic portion of the chain corresponds to 292–470 (KETAVILLQM…RQHYENSTHF (179 aa)). Residues 300-470 (QMVPKGVNME…RQHYENSTHF (171 aa)) are required for plasma membrane localization. A disordered region spans residues 451 to 470 (QGQTLSKTQERQHYENSTHF). The segment covering 458 to 470 (TQERQHYENSTHF) has biased composition (basic and acidic residues).

It belongs to the cation diffusion facilitator (CDF) transporter (TC 2.A.4) family. SLC30A subfamily. In terms of assembly, forms homodimers. Forms heterodimers and high-molecular weight oligomers with SLC30A3, SLC30A2 and SLC30A4; heterodimerization is mediated by covalent-bound tyrosine residues, occurs probably in a tissue-specific manner and could mediate the intracellular zinc transport activity into early endosomes and recycling endosomes. Specifically expressed in fetal liver and fetal brain.

The protein localises to the cell membrane. It localises to the golgi apparatus membrane. The protein resides in the recycling endosome membrane. Its subcellular location is the early endosome membrane. It catalyses the reaction Mn(2+)(out) + Ca(2+)(in) = Mn(2+)(in) + Ca(2+)(out). The enzyme catalyses Zn(2+)(in) = Zn(2+)(out). Its function is as follows. Calcium:manganese antiporter of the plasma membrane mediating the efflux of intracellular manganese coupled to an active extracellular calcium exchange. Required for intracellular manganese homeostasis, an essential cation for the function of several enzymes, including some crucially important for the metabolism of neurotransmitters and other neuronal metabolic pathways. Manganese can also be cytotoxic and induce oxidative stress, mitochondrial dysfunction and apoptosis. Could also have an intracellular zinc ion transporter activity, directly regulating intracellular zinc ion homeostasis and more indirectly various signaling pathway and biological processes. This chain is Calcium/manganese antiporter SLC30A10, found in Mus musculus (Mouse).